The chain runs to 462 residues: L-seryl-tRNA(Sec) selenium transferase (462 aa).

Lys292 carries the N6-(pyridoxal phosphate)lysine modification.

It belongs to the SelA family. Pyridoxal 5'-phosphate is required as a cofactor.

It localises to the cytoplasm. The catalysed reaction is L-seryl-tRNA(Sec) + selenophosphate + H(+) = L-selenocysteinyl-tRNA(Sec) + phosphate. It participates in aminoacyl-tRNA biosynthesis; selenocysteinyl-tRNA(Sec) biosynthesis; selenocysteinyl-tRNA(Sec) from L-seryl-tRNA(Sec) (bacterial route): step 1/1. Its function is as follows. Converts seryl-tRNA(Sec) to selenocysteinyl-tRNA(Sec) required for selenoprotein biosynthesis. The chain is L-seryl-tRNA(Sec) selenium transferase from Clostridium perfringens (strain ATCC 13124 / DSM 756 / JCM 1290 / NCIMB 6125 / NCTC 8237 / Type A).